The primary structure comprises 207 residues: Melanocortin-2 receptor accessory protein 2 (207 aa).

The interval 1-21 (MEMSAQRLASNRTSPQSPSNS) is disordered. The segment covering 7–21 (RLASNRTSPQSPSNS) has biased composition (polar residues). Residue Asn-11 is glycosylated (N-linked (GlcNAc...) asparagine). The helical transmembrane segment at 47–67 (IVIGFWVGLAVFVIFMFFVLT) threads the bilayer. Ser-91 is subject to Phosphoserine.

This sequence belongs to the MRAP family. Homodimer and heterodimer. Forms antiparallel homodimers and heterodimers with MRAP. Interacts with MC1R, MC2R, MC3R and MC5R. Interacts with MC4R. In terms of tissue distribution, predominantly expressed in the brain, mainly in the pons and cerebellum but also in regions involved in energy homeostasis, such as the hypothalamus and brainstem.

The protein resides in the cell membrane. Its subcellular location is the endoplasmic reticulum membrane. In terms of biological role, modulator of melanocortin receptor 4 (MC4R), a receptor involved in energy homeostasis. Plays a central role in the control of energy homeostasis and body weight regulation by increasing ligand-sensitivity of MC4R and MC4R-mediated generation of cAMP. May also act as a negative regulator of MC2R: competes with MRAP for binding to MC2R and impairs the binding of corticotropin (ACTH) to MC2R. May also regulate activity of other melanocortin receptors (MC1R, MC3R and MC5R); however, additional evidence is required in vivo. This chain is Melanocortin-2 receptor accessory protein 2 (Mrap2), found in Mus musculus (Mouse).